The following is a 104-amino-acid chain: Small ribosomal subunit protein uS10 (104 aa).

The protein belongs to the universal ribosomal protein uS10 family. In terms of assembly, part of the 30S ribosomal subunit.

Its function is as follows. Involved in the binding of tRNA to the ribosomes. This Alkaliphilus metalliredigens (strain QYMF) protein is Small ribosomal subunit protein uS10.